We begin with the raw amino-acid sequence, 398 residues long: MKQLTILGSTGSIGNSTLSVVRANPELFKVTALVAGRNVREMAQQCLEFSPRYAAMSDEHSAKSLRLLLAEQGSDTEVYSGETAACELAALDDVDQVMAAIVGIAGLPSTLAAIRAGKQVLLANKESLITCGKLFMDEVKRSRAQLLPIDSEHNAIFQSLPERIQRQLGYSSLNENGVSRIILTGSGGPFRETPLSQFSDVTPDQACAHPNWSMGRKISVDSATMMNKGLEYVEARWLFNASAEQIEVVLHPQSVIHSMVRYHDGSILAQMGTPDMRTPIAHAMAYPMRVSSGVAPLDFCKVGALTFTTPDYQRYPCLKLAIDACNAGQAATTALNAANEISVMAFLDSKIRFTDIEVINRTVVEGLLLSEPTSVEEVLVIDRKARDVAAQVIAKLNN.

Thr10, Gly11, Ser12, Ile13, Gly36, Arg37, Asn38, and Asn124 together coordinate NADPH. A 1-deoxy-D-xylulose 5-phosphate-binding site is contributed by Lys125. An NADPH-binding site is contributed by Glu126. Asp150 provides a ligand contact to Mn(2+). 4 residues coordinate 1-deoxy-D-xylulose 5-phosphate: Ser151, Glu152, Ser186, and His209. Glu152 contributes to the Mn(2+) binding site. NADPH is bound at residue Gly215. 1-deoxy-D-xylulose 5-phosphate-binding residues include Ser222, Asn227, Lys228, and Glu231. Glu231 contributes to the Mn(2+) binding site.

The protein belongs to the DXR family. In terms of assembly, homodimer. Mg(2+) is required as a cofactor. Mn(2+) serves as cofactor.

The enzyme catalyses 2-C-methyl-D-erythritol 4-phosphate + NADP(+) = 1-deoxy-D-xylulose 5-phosphate + NADPH + H(+). Its pathway is isoprenoid biosynthesis; isopentenyl diphosphate biosynthesis via DXP pathway; isopentenyl diphosphate from 1-deoxy-D-xylulose 5-phosphate: step 1/6. Catalyzes the NADPH-dependent rearrangement and reduction of 1-deoxy-D-xylulose-5-phosphate (DXP) to 2-C-methyl-D-erythritol 4-phosphate (MEP). This chain is 1-deoxy-D-xylulose 5-phosphate reductoisomerase, found in Yersinia pseudotuberculosis serotype IB (strain PB1/+).